Consider the following 235-residue polypeptide: Probable Ni/Fe-hydrogenase 1 B-type cytochrome subunit (235 aa).

The Cytoplasmic segment spans residues 1 to 19 (MQQKSDNVVSHYVFEAPVR). Residues 20 to 40 (IWHWLTVLCMAVLMVTGYFIG) traverse the membrane as a helical segment. At 41–63 (KPLPSVSGEATYLFYMGYIRLIH) the chain is on the periplasmic side. The chain crosses the membrane as a helical span at residues 64–84 (FSAGMVFTVVLLMRIYWAFVG). At 85 to 130 (NRYSRELFIVPVWRKSWWQGVWYEIRWYLFLAKRPSADIGHNPIAQ) the chain is on the cytoplasmic side. A helical membrane pass occupies residues 131 to 151 (AAMFGYFLMSVFMIITGFALY). Residues 152–185 (SEHSQYAIFAPFRYVVEFFYWTGGNSMDIHSWHR) lie on the Periplasmic side of the membrane. The helical transmembrane segment at 186 to 203 (LGMWLIGAFVIGHVYMAL) threads the bilayer. Residues 204–235 (REDIMSDDTVISTMVNGYRSHKFGKISNKERS) lie on the Cytoplasmic side of the membrane.

It belongs to the HupC/HyaC/HydC family.

The protein localises to the cell inner membrane. In terms of biological role, probable b-type cytochrome. In Escherichia coli O157:H7, this protein is Probable Ni/Fe-hydrogenase 1 B-type cytochrome subunit (hyaC).